A 468-amino-acid polypeptide reads, in one-letter code: Glutamate--tRNA ligase 2 (468 aa).

Positions 11–21 (PSPTGFLHIGG) match the 'HIGH' region motif. The short motif at 239–243 (KLSKR) is the 'KMSKS' region element. K242 serves as a coordination point for ATP.

This sequence belongs to the class-I aminoacyl-tRNA synthetase family. Glutamate--tRNA ligase type 1 subfamily. As to quaternary structure, monomer.

It localises to the cytoplasm. It carries out the reaction tRNA(Glu) + L-glutamate + ATP = L-glutamyl-tRNA(Glu) + AMP + diphosphate. Its function is as follows. Catalyzes the attachment of glutamate to tRNA(Glu) in a two-step reaction: glutamate is first activated by ATP to form Glu-AMP and then transferred to the acceptor end of tRNA(Glu). This Ruegeria pomeroyi (strain ATCC 700808 / DSM 15171 / DSS-3) (Silicibacter pomeroyi) protein is Glutamate--tRNA ligase 2.